Reading from the N-terminus, the 440-residue chain is Ribulose bisphosphate carboxylase large chain (440 aa).

The residue at position 4 (K4) is an N6,N6,N6-trimethyllysine. Positions 113 and 163 each coordinate substrate. K165 functions as the Proton acceptor in the catalytic mechanism. K167 is a substrate binding site. Mg(2+) is bound by residues K191, D193, and E194. K191 carries the post-translational modification N6-carboxylysine. H284 functions as the Proton acceptor in the catalytic mechanism. Positions 285, 317, and 369 each coordinate substrate.

Belongs to the RuBisCO large chain family. Type I subfamily. Heterohexadecamer of 8 large chains and 8 small chains; disulfide-linked. The disulfide link is formed within the large subunit homodimers. It depends on Mg(2+) as a cofactor. The disulfide bond which can form in the large chain dimeric partners within the hexadecamer appears to be associated with oxidative stress and protein turnover.

It is found in the plastid. The protein localises to the chloroplast. The catalysed reaction is 2 (2R)-3-phosphoglycerate + 2 H(+) = D-ribulose 1,5-bisphosphate + CO2 + H2O. The enzyme catalyses D-ribulose 1,5-bisphosphate + O2 = 2-phosphoglycolate + (2R)-3-phosphoglycerate + 2 H(+). Its function is as follows. RuBisCO catalyzes two reactions: the carboxylation of D-ribulose 1,5-bisphosphate, the primary event in carbon dioxide fixation, as well as the oxidative fragmentation of the pentose substrate in the photorespiration process. Both reactions occur simultaneously and in competition at the same active site. This Ptychomitrium gardneri (Gardner's ptychomitrium moss) protein is Ribulose bisphosphate carboxylase large chain.